The following is a 79-amino-acid chain: MRALLIIAGLALFLVVCNASQVNEQRKLNEMLSVMFAVEEPQERDDCLGMFSSCNPDNDKCCEGRKCDRRDQWCKWNPW.

An N-terminal signal peptide occupies residues 1-19 (MRALLIIAGLALFLVVCNA). Positions 20-44 (SQVNEQRKLNEMLSVMFAVEEPQER) are excised as a propeptide. 3 disulfides stabilise this stretch: Cys-47-Cys-62, Cys-54-Cys-67, and Cys-61-Cys-74.

The protein belongs to the neurotoxin 10 (Hwtx-1) family. 34 (Jztx-26) subfamily. In terms of tissue distribution, expressed by the venom gland.

It is found in the secreted. In terms of biological role, probable ion channel inhibitor. The protein is U16-theraphotoxin-Cg1a of Chilobrachys guangxiensis (Chinese earth tiger tarantula).